Consider the following 169-residue polypeptide: MPLLDSFTVDHTRMNAPAVRVAKHMSTPKGDAITVFDLRFCAPNKDILSERGIHTLEHLFAGFMRDHLNGSDVEIIDISPMGCRTGFYMSLIGEPSERQVADAWLASMEDVLKVVEQSEIPELNEYQCGTYQMHSLEQAQDIARNIIAAGVSVNRNDDLKLSDEILGQL.

Fe cation is bound by residues histidine 54, histidine 58, and cysteine 128.

This sequence belongs to the LuxS family. Homodimer. Fe cation is required as a cofactor.

It catalyses the reaction S-(5-deoxy-D-ribos-5-yl)-L-homocysteine = (S)-4,5-dihydroxypentane-2,3-dione + L-homocysteine. In terms of biological role, involved in the synthesis of autoinducer 2 (AI-2) which is secreted by bacteria and is used to communicate both the cell density and the metabolic potential of the environment. The regulation of gene expression in response to changes in cell density is called quorum sensing. Catalyzes the transformation of S-ribosylhomocysteine (RHC) to homocysteine (HC) and 4,5-dihydroxy-2,3-pentadione (DPD). The protein is S-ribosylhomocysteine lyase of Shewanella sp. (strain MR-7).